The chain runs to 248 residues: tRNA (guanine-N(1)-)-methyltransferase (248 aa).

Residues Gly-117 and 137 to 142 (LGDFVL) contribute to the S-adenosyl-L-methionine site.

This sequence belongs to the RNA methyltransferase TrmD family. In terms of assembly, homodimer.

Its subcellular location is the cytoplasm. The catalysed reaction is guanosine(37) in tRNA + S-adenosyl-L-methionine = N(1)-methylguanosine(37) in tRNA + S-adenosyl-L-homocysteine + H(+). Specifically methylates guanosine-37 in various tRNAs. In Herminiimonas arsenicoxydans, this protein is tRNA (guanine-N(1)-)-methyltransferase.